The primary structure comprises 410 residues: Transcription factor E2F4 (410 aa).

Positions 1 to 20 are disordered; sequence MAEAGPQAPPPPGTPSRHEK. Position 2 is an N-acetylalanine (A2). A DNA-binding region spans residues 16 to 85; it reads SRHEKSLGLL…KNSIQWKGVG (70 aa). Positions 43–65 are leucine-zipper; it reads LKLAADTLAVRQKRRIYDITNVL. The DEF box motif lies at 48–85; it reads DTLAVRQKRRIYDITNVLEGIGLIEKKSKNSIQWKGVG. A dimerization region spans residues 86 to 181; the sequence is PGCNTREIAD…GLNGQKKYQI (96 aa). Disordered regions lie at residues 203-258 and 303-341; these read PPVA…GSTQ and SALL…DPTG. Composition is skewed to low complexity over residues 231–252 and 308–324; these read PALA…TPTP and SSSS…SSSS. Residues 334 to 410 form a transactivation region; that stretch reads PIKADPTGVL…DLFDVPVLKL (77 aa). S381 is subject to Phosphoserine. An HCFC1-binding-motif (HBM) motif is present at residues 386-389; that stretch reads DHDY. An interaction with RBL1 and RBL2 region spans residues 387–404; it reads HDYIYNLDESEGVCDLFD.

The protein belongs to the E2F/DP family. In terms of assembly, component of the DRTF1/E2F transcription factor complex. Binds cooperatively with TFDP1/Dp-1 to E2F sites. The E2F4/TFDP1 dimer interacts preferentially with pocket protein RBL1, which inhibits the E2F transactivation domain. Lower affinity interaction has been found with retinoblastoma protein RB1. Interacts with TRRAP, which probably mediates its interaction with histone acetyltransferase complexes, leading to transcription activation. Interacts with HCFC1. Component of the DREAM complex (also named LINC complex) at least composed of E2F4, E2F5, LIN9, LIN37, LIN52, LIN54, MYBL1, MYBL2, RBL1, RBL2, RBBP4, TFDP1 and TFDP2. The complex exists in quiescent cells where it represses cell cycle-dependent genes. It dissociates in S phase when LIN9, LIN37, LIN52 and LIN54 form a subcomplex that binds to MYBL2. Interacts with PML. Interacts with CEBPA (when phosphorylated). Differentially phosphorylated in vivo.

It localises to the nucleus. Transcription activator that binds DNA cooperatively with DP proteins through the E2 recognition site, 5'-TTTC[CG]CGC-3' found in the promoter region of a number of genes whose products are involved in cell cycle regulation or in DNA replication. The DRTF1/E2F complex functions in the control of cell-cycle progression from G1 to S phase. E2F4 binds with high affinity to RBL1 and RBL2. In some instances can also bind RB1. Specifically required for multiciliate cell differentiation: together with MCIDAS and E2F5, binds and activate genes required for centriole biogenesis. This is Transcription factor E2F4 (E2f4) from Mus musculus (Mouse).